A 557-amino-acid polypeptide reads, in one-letter code: Formate--tetrahydrofolate ligase 2 (557 aa).

Position 66 to 73 (66 to 73 (TPAGEGKT)) interacts with ATP.

The protein belongs to the formate--tetrahydrofolate ligase family.

The enzyme catalyses (6S)-5,6,7,8-tetrahydrofolate + formate + ATP = (6R)-10-formyltetrahydrofolate + ADP + phosphate. It functions in the pathway one-carbon metabolism; tetrahydrofolate interconversion. In Streptococcus pyogenes serotype M1, this protein is Formate--tetrahydrofolate ligase 2.